Consider the following 328-residue polypeptide: ATP synthase mitochondrial F1 complex assembly factor 1 (328 aa).

The N-terminal 57 residues, 1 to 57 (MAAVVVAAAGGAGPAVLQVAGLYRGLCAVRSRALGLGLVSPAQLRVFPVRPGSGRPE), are a transit peptide targeting the mitochondrion.

It belongs to the ATP11 family. As to quaternary structure, interacts with ATP5F1B; involved in the assembly of the F1 component of the mitochondrial ATP synthase (ATPase). Weakly expressed in muscle.

It localises to the mitochondrion inner membrane. In terms of biological role, has a complex stabilizing activity in the assembly of the mitochondrial F1-F0 complex. The sequence is that of ATP synthase mitochondrial F1 complex assembly factor 1 from Homo sapiens (Human).